We begin with the raw amino-acid sequence, 306 residues long: Type 2A encapsulin shell protein SrpI (306 aa).

It belongs to the encapsulin family. Family 2A subfamily. The 24.5 nm encapsulin nanocompartment is formed by 60 subunits; monomers form pentamers which assemble to form shells. There are 12 positively charged pores where the pentamers meet with a minimal pore diameter of 3.7 Angstroms as well 3-fold axis channels and dimer channels.

Its subcellular location is the encapsulin nanocompartment. Its function is as follows. Shell component of a type 2A encapsulin nanocompartment. Expression in E.coli generates nanocompartments with an average diameter of 25 nm. They can be disassembled by treatment with 6M guanidine hydrochloride and reassembled with cargo. The nanocompartment is probably involved in sulfur metabolism. Probably allows passage of cysteine into its interior; during growth in light the physiological pH is 8-8.4, about 30-54% of free cysteine (charge -1) would be able to pass through the shell. The protein is Type 2A encapsulin shell protein SrpI of Synechococcus elongatus (strain ATCC 33912 / PCC 7942 / FACHB-805) (Anacystis nidulans R2).